Here is a 452-residue protein sequence, read N- to C-terminus: Eukaryotic translation initiation factor 3 subunit E (452 aa).

Residues 1–17 are compositionally biased toward polar residues; sequence MADNTPTTANDLLNDAT. The segment at 1–23 is disordered; sequence MADNTPTTANDLLNDATQAAAKS. The PCI domain occupies 246–426; that stretch reads PFFNHEPARD…GTVVMNHPPS (181 aa).

Belongs to the eIF-3 subunit E family. Component of the eukaryotic translation initiation factor 3 (eIF-3) complex.

The protein localises to the cytoplasm. Component of the eukaryotic translation initiation factor 3 (eIF-3) complex, which is involved in protein synthesis of a specialized repertoire of mRNAs and, together with other initiation factors, stimulates binding of mRNA and methionyl-tRNAi to the 40S ribosome. The eIF-3 complex specifically targets and initiates translation of a subset of mRNAs involved in cell proliferation. The protein is Eukaryotic translation initiation factor 3 subunit E (int6) of Botryotinia fuckeliana (strain B05.10) (Noble rot fungus).